Consider the following 209-residue polypeptide: Thiamine-phosphate synthase (209 aa).

Residues 36-40 (QLRDK) and asparagine 68 contribute to the 4-amino-2-methyl-5-(diphosphooxymethyl)pyrimidine site. Aspartate 69 and aspartate 88 together coordinate Mg(2+). Serine 107 contacts 4-amino-2-methyl-5-(diphosphooxymethyl)pyrimidine. A 2-[(2R,5Z)-2-carboxy-4-methylthiazol-5(2H)-ylidene]ethyl phosphate-binding site is contributed by 133–135 (TNS). A 4-amino-2-methyl-5-(diphosphooxymethyl)pyrimidine-binding site is contributed by lysine 136. 2-[(2R,5Z)-2-carboxy-4-methylthiazol-5(2H)-ylidene]ethyl phosphate is bound by residues glycine 164 and 184 to 185 (IT).

This sequence belongs to the thiamine-phosphate synthase family. Requires Mg(2+) as cofactor.

It catalyses the reaction 2-[(2R,5Z)-2-carboxy-4-methylthiazol-5(2H)-ylidene]ethyl phosphate + 4-amino-2-methyl-5-(diphosphooxymethyl)pyrimidine + 2 H(+) = thiamine phosphate + CO2 + diphosphate. It carries out the reaction 2-(2-carboxy-4-methylthiazol-5-yl)ethyl phosphate + 4-amino-2-methyl-5-(diphosphooxymethyl)pyrimidine + 2 H(+) = thiamine phosphate + CO2 + diphosphate. The catalysed reaction is 4-methyl-5-(2-phosphooxyethyl)-thiazole + 4-amino-2-methyl-5-(diphosphooxymethyl)pyrimidine + H(+) = thiamine phosphate + diphosphate. It functions in the pathway cofactor biosynthesis; thiamine diphosphate biosynthesis; thiamine phosphate from 4-amino-2-methyl-5-diphosphomethylpyrimidine and 4-methyl-5-(2-phosphoethyl)-thiazole: step 1/1. Its function is as follows. Condenses 4-methyl-5-(beta-hydroxyethyl)thiazole monophosphate (THZ-P) and 2-methyl-4-amino-5-hydroxymethyl pyrimidine pyrophosphate (HMP-PP) to form thiamine monophosphate (TMP). The sequence is that of Thiamine-phosphate synthase from Shouchella clausii (strain KSM-K16) (Alkalihalobacillus clausii).